The sequence spans 268 residues: MMQRCLRLPKPLALRRGLHVAQVNGQAVATEAPEAEPQDAFERQYLKERIEISPFQRVFLGAGSSIAALLDPRRHDMIACLGETTGEDALLTILDTMQASEEGQRIMADKPRIHTSTIDFKYLETLPPDTFGAAYVKFLKDNQVTPDSRMAVRFLEDPKLAYLMTRYRECHDLIHTVLDMPTNMLGEVAVKWVEALNTGLPMCYGGAVFGAVRLRPKQRRAYLKHYLPWALENGKRSKPLMPVYWEKRWEQNIHELRSELGITVLNKA.

Zn(2+) is bound by residues histidine 171, aspartate 172, histidine 175, and glutamate 187.

This sequence belongs to the COQ4 family. As to quaternary structure, component of a multi-subunit COQ enzyme complex. It depends on Zn(2+) as a cofactor.

The protein resides in the mitochondrion inner membrane. It catalyses the reaction a 4-hydroxy-3-methoxy-5-(all-trans-polyprenyl)benzoate + H(+) = a 2-methoxy-6-(all-trans-polyprenyl)phenol + CO2. It functions in the pathway cofactor biosynthesis; ubiquinone biosynthesis. Lyase that catalyzes the C1-decarboxylation of 4-hydroxy-3-methoxy-5-(all-trans-polyprenyl)benzoic acid into 2-methoxy-6-(all-trans-polyprenyl)phenol during ubiquinone biosynthesis. This Drosophila yakuba (Fruit fly) protein is Ubiquinone biosynthesis protein COQ4 homolog, mitochondrial.